We begin with the raw amino-acid sequence, 209 residues long: Uracil phosphoribosyltransferase (209 aa).

Residues Arg-79, Arg-104, and 131-139 (DPMLATGAS) each bind 5-phospho-alpha-D-ribose 1-diphosphate. Residues Ile-194 and 199 to 201 (GDA) contribute to the uracil site. Asp-200 is a 5-phospho-alpha-D-ribose 1-diphosphate binding site.

This sequence belongs to the UPRTase family. The cofactor is Mg(2+).

It carries out the reaction UMP + diphosphate = 5-phospho-alpha-D-ribose 1-diphosphate + uracil. It participates in pyrimidine metabolism; UMP biosynthesis via salvage pathway; UMP from uracil: step 1/1. With respect to regulation, allosterically activated by GTP. In terms of biological role, catalyzes the conversion of uracil and 5-phospho-alpha-D-ribose 1-diphosphate (PRPP) to UMP and diphosphate. The chain is Uracil phosphoribosyltransferase from Staphylococcus haemolyticus (strain JCSC1435).